We begin with the raw amino-acid sequence, 185 residues long: Ribosome-recycling factor (185 aa).

The protein belongs to the RRF family.

It is found in the cytoplasm. Functionally, responsible for the release of ribosomes from messenger RNA at the termination of protein biosynthesis. May increase the efficiency of translation by recycling ribosomes from one round of translation to another. This chain is Ribosome-recycling factor, found in Streptococcus pyogenes serotype M18 (strain MGAS8232).